The following is an 885-amino-acid chain: Chromatin assembly factor 1 subunit A-B (885 aa).

4 disordered regions span residues M1–Q24, E115–C157, L176–K361, and V536–K605. A compositionally biased stretch (low complexity) spans K12–K21. 3 stretches are compositionally biased toward polar residues: residues D116–N128, Q134–C157, and S182–S193. 2 stretches are compositionally biased toward low complexity: residues V211–V227 and S237–T254. Residues S251–K376 adopt a coiled-coil conformation. The span at S255 to K361 shows a compositional bias: basic and acidic residues. Acidic residues-rich tracts occupy residues V536–G548 and E557–G573. Residues C629–S665 form a necessary for homodimerization, competence for chromatin assembly region.

The protein belongs to the CHAF1A family. As to quaternary structure, homodimer.

It localises to the nucleus. Involved in chromatin assembly in DNA replication and DNA repair. This Xenopus laevis (African clawed frog) protein is Chromatin assembly factor 1 subunit A-B (chaf1a-b).